We begin with the raw amino-acid sequence, 89 residues long: MAKKSKVIKELKRQKLVEQYADIRRELKAKGDWEALSKLPRDSAPARLHNRCTVTGRPRGYMRKFKLSRIAFRELAHKGRIPGVKKASW.

It belongs to the universal ribosomal protein uS14 family. As to quaternary structure, part of the 30S ribosomal subunit. Contacts proteins S3 and S10.

Its function is as follows. Binds 16S rRNA, required for the assembly of 30S particles and may also be responsible for determining the conformation of the 16S rRNA at the A site. This chain is Small ribosomal subunit protein uS14A, found in Bacillus velezensis (strain DSM 23117 / BGSC 10A6 / LMG 26770 / FZB42) (Bacillus amyloliquefaciens subsp. plantarum).